We begin with the raw amino-acid sequence, 156 residues long: Small ribosomal subunit protein uS7 (156 aa).

It belongs to the universal ribosomal protein uS7 family. As to quaternary structure, part of the 30S ribosomal subunit. Contacts proteins S9 and S11.

Its function is as follows. One of the primary rRNA binding proteins, it binds directly to 16S rRNA where it nucleates assembly of the head domain of the 30S subunit. Is located at the subunit interface close to the decoding center, probably blocks exit of the E-site tRNA. In Pelotomaculum thermopropionicum (strain DSM 13744 / JCM 10971 / SI), this protein is Small ribosomal subunit protein uS7.